Reading from the N-terminus, the 33-residue chain is Brevinin 2AV (33 aa).

Residues Cys27 and Cys33 are joined by a disulfide bond.

In terms of tissue distribution, expressed by the skin glands.

It is found in the secreted. Its function is as follows. Has antibacterial activity. The sequence is that of Brevinin 2AV from Rana arvalis (Moor frog).